Here is an 815-residue protein sequence, read N- to C-terminus: Chromatin assembly factor 1 subunit FAS1 (815 aa).

Disordered stretches follow at residues 1–39, 292–330, 434–477, 502–577, and 791–815; these read MDEV…TSEE, NNKE…KKQL, KLST…KKSR, QVVK…EGVQ, and RCLP…NENA. Basic and acidic residues-rich tracts occupy residues 10–21 and 292–328; these read NENRKTMIEPKK and NNKE…ELKK. Residues 244-336 are a coiled coil; sequence EEKLLLKQLE…KKQLQVQKQA (93 aa). Acidic residues-rich tracts occupy residues 516–532 and 554–576; these read LDYE…EEAG and DDED…DEGV. Positions 806-815 are enriched in basic and acidic residues; it reads AAERLENENA.

This sequence belongs to the CHAF1A family. As to quaternary structure, component of the chromatin assembly factor 1 (CAF-1) complex, composed of FAS1, FAS2 and MSI1. Interacts with CYP71. In terms of tissue distribution, expressed in the shoot apical meristem, young leaf primordia, root tip and first lateral root primordium at the hypocotyl/root junction.

The protein resides in the nucleus. Its function is as follows. Component of the chromatin assembly factor complex (CAF-1) involved in chromatin assembly following DNA replication and DNA repair. Assembles histone octamers onto replicating DNA in vitro. Required for several aspects of development, including seedling growth and leaf hair differentiation. Plays a critical role in the organization of shoot apical meristem (SAM) and root apical meristem (RAM) during postembryonic development by facilitating stable maintenance of gene expression states. Seems not required to maintain transcriptional repression of heterochromatic genes. Involved in heterologous recombination. May repress endocycle. The chain is Chromatin assembly factor 1 subunit FAS1 (FAS1) from Arabidopsis thaliana (Mouse-ear cress).